A 296-amino-acid chain; its full sequence is UDP-N-acetylenolpyruvoylglucosamine reductase (296 aa).

The FAD-binding PCMH-type domain occupies 18 to 189 (LGGRALAEVR…TGADIVLRRG (172 aa)). Residue Arg166 is part of the active site. Cys218 acts as the Proton donor in catalysis. The active site involves Glu289.

Belongs to the MurB family. Requires FAD as cofactor.

Its subcellular location is the cytoplasm. It carries out the reaction UDP-N-acetyl-alpha-D-muramate + NADP(+) = UDP-N-acetyl-3-O-(1-carboxyvinyl)-alpha-D-glucosamine + NADPH + H(+). The protein operates within cell wall biogenesis; peptidoglycan biosynthesis. In terms of biological role, cell wall formation. This is UDP-N-acetylenolpyruvoylglucosamine reductase from Nitratidesulfovibrio vulgaris (strain ATCC 29579 / DSM 644 / CCUG 34227 / NCIMB 8303 / VKM B-1760 / Hildenborough) (Desulfovibrio vulgaris).